A 359-amino-acid polypeptide reads, in one-letter code: S-geranylgeranyl-glutathione receptor P2RY8 (359 aa).

The Extracellular segment spans residues 1 to 19 (MQVPNSTGPDNATLQMLRN). 2 N-linked (GlcNAc...) asparagine glycosylation sites follow: Asn5 and Asn11. Residues 20–40 (PAIAVALPVVYSLVAAVSIPG) traverse the membrane as a helical segment. Residues 41 to 57 (NLFSLWVLCRRMGPRSP) lie on the Cytoplasmic side of the membrane. Residues 58–78 (SVIFMINLSVTDLMLASVLPF) form a helical membrane-spanning segment. Residues 79-88 (QIYYHCNRHH) are Extracellular-facing. Residues 89 to 109 (WVFGVLLCNVVTVAFYANMYS) traverse the membrane as a helical segment. Residues 110–138 (SILTMTCISVERFLGVLYPLSSKRWRRRR) are Cytoplasmic-facing. Residues 139-159 (YAVAACAGTWLLLLTALSPLA) form a helical membrane-spanning segment. Topologically, residues 160–187 (RTDLTYPVHALGIITCFDVLKWTMLPSV) are extracellular. A helical membrane pass occupies residues 188–208 (AMWAVFLFTIFILLFLIPFVI). The Cytoplasmic segment spans residues 209 to 237 (TVACYTATILKLLRTEEAHGREQRRRAVG). A helical membrane pass occupies residues 238-258 (LAAVVLLAFVTCFAPNNFVLL). Topologically, residues 259-275 (AHIVSRLFYGKSYYHVY) are extracellular. A helical membrane pass occupies residues 276–296 (KLTLCLSCLNNCLDPFVYYFA). The Cytoplasmic segment spans residues 297–359 (SREFQLRLRE…PGLQRQESVF (63 aa)). A disordered region spans residues 329-359 (RTTSVRSEAGAHPEGMEGATRPGLQRQESVF).

This sequence belongs to the G-protein coupled receptor 1 family. Barely detectable in normal blood leukocytes. Weaker expression was seen in heart, kidney and lung. Not detected in brain. Expressed in B cells and follicular helper T cells in germinal centers (at protein level).

It localises to the cell membrane. G protein-coupled receptor for S-geranylgeranyl-glutathione (GGG), an endogenous metabolite present in lymphoid tissues. Couples the binding of GGG to the activation of GNA13 and downstream repression of AKT activation in lymphocytes defining their positioning and growth within lymphoid organs. In lymphoid follicles, confines B cells and follicular helper T cells in germinal centers (GCs) in response to GGG local gradients established by GGT5 (via GGG catabolism) and ABCC1 (via extracellular transport) with lower concentrations of GGG found in the follicular dendritic cell network region around which germinal centers are formed. In the bone marrow, also in response to GGG gradients established by GGT5 and ABCC1, it restricts chemotactic transmigration of B cells, T cells and NK cells from blood vessels to the bone marrow parenchyma. Contributes to GNA13-dependent pathway that suppresses GC B cell growth. In Homo sapiens (Human), this protein is S-geranylgeranyl-glutathione receptor P2RY8.